Reading from the N-terminus, the 152-residue chain is 17.1 kDa class II heat shock protein (152 aa).

Positions 36-152 (DAKAMAATPA…KPKTIQVKVA (117 aa)) constitute a sHSP domain.

This sequence belongs to the small heat shock protein (HSP20) family.

The protein resides in the cytoplasm. This chain is 17.1 kDa class II heat shock protein (HSP17.7), found in Pisum sativum (Garden pea).